The chain runs to 560 residues: Nibrin homolog (560 aa).

In terms of domain architecture, FHA spans 25–87; it reads YKVGRKDCDV…YGTFFNKVQG (63 aa). Residues 115 to 190 enclose the BRCT domain; sequence TFRLSFVPIV…KQIVLGDWFK (76 aa). Residues 511-518 carry the Nuclear localization signal motif; that stretch reads YKRGTVID.

Belongs to the Nibrin family. In terms of assembly, component of the MRN complex composed of two heterodimers RAD50 and MRE11 associated with a single NBS1.

It localises to the nucleus. Its subcellular location is the chromosome. Functionally, component of the MRN complex, which plays a central role in double-strand break (DSB) repair, DNA recombination, maintenance of telomere integrity and meiosis. The MRN complex is involved in the repair of DNA double-strand breaks (DSBs) via homologous recombination (HR), an error-free mechanism which primarily occurs during S and G2 phases. The complex (1) mediates the end resection of damaged DNA, which generates proper single-stranded DNA, a key initial steps in HR, and is (2) required for the recruitment of other repair factors and efficient activation of ATM and ATR upon DNA damage. The MRN complex possesses single-strand endonuclease activity and double-strand-specific 3'-5' exonuclease activity, which are provided by MRE11, to initiate end resection, which is required for single-strand invasion and recombination. Within the MRN complex, NBS1 acts as a protein-protein adapter, which specifically recognizes and binds phosphorylated proteins, promoting their recruitment to DNA damage sites. Recruits MRE11 and RAD50 components of the MRN complex to DSBs in response to DNA damage. The protein is Nibrin homolog of Oryza sativa subsp. indica (Rice).